A 446-amino-acid chain; its full sequence is Chromosomal replication initiator protein DnaA (446 aa).

The segment at 1–81 is domain I, interacts with DnaA modulators; sequence MENISDLWNS…AKLAIRFIIP (81 aa). A domain II region spans residues 81–109; sequence PQSQAEEDIDLPPVKRNPAQDDSAHLPQS. The tract at residues 110–326 is domain III, AAA+ region; the sequence is MLNPKYTFDT…GALIRVVAYS (217 aa). ATP is bound by residues glycine 154, glycine 156, lysine 157, and threonine 158. The tract at residues 327–446 is domain IV, binds dsDNA; the sequence is SLINKDINAD…QVEEINGILK (120 aa).

It belongs to the DnaA family. Oligomerizes as a right-handed, spiral filament on DNA at oriC.

Its subcellular location is the cytoplasm. Its function is as follows. Plays an essential role in the initiation and regulation of chromosomal replication. ATP-DnaA binds to the origin of replication (oriC) to initiate formation of the DNA replication initiation complex once per cell cycle. Binds the DnaA box (a 9 base pair repeat at the origin) and separates the double-stranded (ds)DNA. Forms a right-handed helical filament on oriC DNA; dsDNA binds to the exterior of the filament while single-stranded (ss)DNA is stabiized in the filament's interior. The ATP-DnaA-oriC complex binds and stabilizes one strand of the AT-rich DNA unwinding element (DUE), permitting loading of DNA polymerase. After initiation quickly degrades to an ADP-DnaA complex that is not apt for DNA replication. Binds acidic phospholipids. The chain is Chromosomal replication initiator protein DnaA from Bacillus cereus (strain G9842).